Here is a 253-residue protein sequence, read N- to C-terminus: Tetraspanin-11 (253 aa).

Helical transmembrane passes span 19–39 (LLFIFNFFFWVGGAAVMAVGI), 63–83 (VLIFVGGLVMTTGFLGFGAII), 93–113 (YFCLLLAIFLVELVAGVLAHV), and 220–240 (LLLMGAVGIGVACLQICGMVL).

Belongs to the tetraspanin (TM4SF) family.

The protein localises to the membrane. This chain is Tetraspanin-11 (Tspan11), found in Rattus norvegicus (Rat).